A 281-amino-acid polypeptide reads, in one-letter code: ATP phosphoribosyltransferase (281 aa).

This sequence belongs to the ATP phosphoribosyltransferase family. Long subfamily. Requires Mg(2+) as cofactor.

Its subcellular location is the cytoplasm. It catalyses the reaction 1-(5-phospho-beta-D-ribosyl)-ATP + diphosphate = 5-phospho-alpha-D-ribose 1-diphosphate + ATP. The protein operates within amino-acid biosynthesis; L-histidine biosynthesis; L-histidine from 5-phospho-alpha-D-ribose 1-diphosphate: step 1/9. Its activity is regulated as follows. Feedback inhibited by histidine. Its function is as follows. Catalyzes the condensation of ATP and 5-phosphoribose 1-diphosphate to form N'-(5'-phosphoribosyl)-ATP (PR-ATP). Has a crucial role in the pathway because the rate of histidine biosynthesis seems to be controlled primarily by regulation of HisG enzymatic activity. The chain is ATP phosphoribosyltransferase from Corynebacterium glutamicum (strain R).